The primary structure comprises 133 residues: uncharacterized protein (133 aa).

Residues 107–133 (TSHHRAAGLQSQHAPGSGRVRITGGKV) are disordered.

This is an uncharacterized protein from Homo sapiens (Human).